We begin with the raw amino-acid sequence, 1770 residues long: Transposon Ty2-DR3 Gag-Pol polyprotein (1770 aa).

Polar residues-rich tracts occupy residues 1-11, 19-39, 49-60, 366-390, 399-408, and 415-435; these read MESQQLHQNPH, ASVTSKEVPSNQDPLAVSASN, KVNSQQETTPGT, VSRTSPNTTNTKVTSRNYHRTNSSK, IATSSKFSRV, and ESTVSSQYLSDDNELSLGQQQ. Disordered stretches follow at residues 1–89 and 355–449; these read MESQ…QQHG and SQYK…SNDE. The tract at residues 295–397 is RNA-binding; that stretch reads ENNINVSDRL…SSKPRAAKAH (103 aa). Asp457 acts as the For protease activity; shared with dimeric partner in catalysis. Residues 579–636 are integrase-type zinc finger-like; the sequence is NVNKSKSVNKYPYPLIHRMLGHANFRSIQKSLKKNAVTYLKESDIEWSNASTYQCPDC. The region spanning 656–831 is the Integrase catalytic domain; that stretch reads ESYEPFQYLH…AGLDITTILP (176 aa). Mg(2+) contacts are provided by Asp667 and Asp732. 2 disordered regions span residues 1005–1038 and 1057–1205; these read GGTIESDTTSPRHSSTFTARNQKRPGSPNDMIDL and GGTE…TEIE. Composition is skewed to polar residues over residues 1009–1024 and 1065–1082; these read ESDTTSPRHSSTFTAR and QRNSDTNIKYRTTNSTPS. The short motif at 1193–1227 is the Bipartite nuclear localization signal element; sequence KKRSLEDNETEIEVSRDTWNNKNMRSLEPPRSKKR. The Reverse transcriptase Ty1/copia-type domain occupies 1353–1491; that stretch reads NDYYITQLDI…DILGLEIKYQ (139 aa). Residues Asp1361, Asp1442, Asp1443, Asp1625, Glu1667, and Asp1700 each coordinate Mg(2+). Positions 1625 to 1767 constitute an RNase H Ty1/copia-type domain; that stretch reads DASYGNQPYY…IKTFKLLTNK (143 aa).

The capsid protein forms a homotrimer, from which the VLPs are assembled. The protease is a homodimer, whose active site consists of two apposed aspartic acid residues. Initially, virus-like particles (VLPs) are composed of the structural unprocessed proteins Gag and Gag-Pol, and also contain the host initiator methionine tRNA (tRNA(i)-Met) which serves as a primer for minus-strand DNA synthesis, and a dimer of genomic Ty RNA. Processing of the polyproteins occurs within the particle and proceeds by an ordered pathway, called maturation. First, the protease (PR) is released by autocatalytic cleavage of the Gag-Pol polyprotein, and this cleavage is a prerequisite for subsequent processing at the remaining sites to release the mature structural and catalytic proteins. Maturation takes place prior to the RT reaction and is required to produce transposition-competent VLPs.

It localises to the cytoplasm. The protein resides in the nucleus. The enzyme catalyses DNA(n) + a 2'-deoxyribonucleoside 5'-triphosphate = DNA(n+1) + diphosphate. It catalyses the reaction Endonucleolytic cleavage to 5'-phosphomonoester.. Capsid protein (CA) is the structural component of the virus-like particle (VLP), forming the shell that encapsulates the retrotransposons dimeric RNA genome. The particles are assembled from trimer-clustered units and there are holes in the capsid shells that allow for the diffusion of macromolecules. CA also has nucleocapsid-like chaperone activity, promoting primer tRNA(i)-Met annealing to the multipartite primer-binding site (PBS), dimerization of Ty2 RNA and initiation of reverse transcription. Functionally, the aspartyl protease (PR) mediates the proteolytic cleavages of the Gag and Gag-Pol polyproteins after assembly of the VLP. Its function is as follows. Reverse transcriptase/ribonuclease H (RT) is a multifunctional enzyme that catalyzes the conversion of the retro-elements RNA genome into dsDNA within the VLP. The enzyme displays a DNA polymerase activity that can copy either DNA or RNA templates, and a ribonuclease H (RNase H) activity that cleaves the RNA strand of RNA-DNA heteroduplexes during plus-strand synthesis and hydrolyzes RNA primers. The conversion leads to a linear dsDNA copy of the retrotransposon that includes long terminal repeats (LTRs) at both ends. In terms of biological role, integrase (IN) targets the VLP to the nucleus, where a subparticle preintegration complex (PIC) containing at least integrase and the newly synthesized dsDNA copy of the retrotransposon must transit the nuclear membrane. Once in the nucleus, integrase performs the integration of the dsDNA into the host genome. This Saccharomyces cerevisiae (strain ATCC 204508 / S288c) (Baker's yeast) protein is Transposon Ty2-DR3 Gag-Pol polyprotein (TY2B-DR3).